Reading from the N-terminus, the 481-residue chain is Glutamate--tRNA ligase (481 aa).

Residues 28-38 (PSPTGFLHLGG) carry the 'HIGH' region motif. Residues 139–148 (RYDGTWRPEP) are compositionally biased toward basic and acidic residues. Residues 139 to 159 (RYDGTWRPEPGKTLPPVPADR) are disordered. Residues 260–264 (KLSKR) carry the 'KMSKS' region motif. Position 263 (lysine 263) interacts with ATP.

The protein belongs to the class-I aminoacyl-tRNA synthetase family. Glutamate--tRNA ligase type 1 subfamily. As to quaternary structure, monomer.

The protein localises to the cytoplasm. The catalysed reaction is tRNA(Glu) + L-glutamate + ATP = L-glutamyl-tRNA(Glu) + AMP + diphosphate. In terms of biological role, catalyzes the attachment of glutamate to tRNA(Glu) in a two-step reaction: glutamate is first activated by ATP to form Glu-AMP and then transferred to the acceptor end of tRNA(Glu). This chain is Glutamate--tRNA ligase, found in Bordetella bronchiseptica (strain ATCC BAA-588 / NCTC 13252 / RB50) (Alcaligenes bronchisepticus).